The chain runs to 236 residues: Lectin alpha chain (236 aa).

2 residues coordinate Mn(2+): E8 and D10. Ca(2+)-binding residues include D10, Y12, N14, and D19. Residue Y12 coordinates a carbohydrate. The Mn(2+) site is built by D19, H24, and S34. Position 99-100 (99-100 (LY)) interacts with a carbohydrate. Residue D207 coordinates Ca(2+). An a carbohydrate-binding site is contributed by R227.

It belongs to the leguminous lectin family. In terms of assembly, equilibrium between homodimer and homotetramer. Oligomerization is pH-dependent with homotetramers forming at pH 6.5 and above. Post-translationally, the beta and gamma chains are produced by partial proteolytic processing of the lectin alpha chain by an asparaginyl endopeptidase. Mixture of 60% alpha lectin and 40% of its beta and gamma proteolytic fragments. In terms of tissue distribution, seed.

In terms of biological role, D-mannose/D-glucose-binding lectin. Has anti-inflammatory activity in rats. Induces histamine release in mast cells from rat. Induces lymphocyte proliferation and IFNG production. The chain is Lectin alpha chain from Cratylia argentea (Cratylia floribunda).